Here is a 302-residue protein sequence, read N- to C-terminus: Pseudouridine-5'-phosphate glycosidase (302 aa).

The Proton donor role is filled by glutamate 25. Substrate contacts are provided by lysine 86 and valine 106. Aspartate 138 provides a ligand contact to Mn(2+). Residue 140 to 142 (SAD) coordinates substrate. Lysine 159 functions as the Nucleophile in the catalytic mechanism.

The protein belongs to the pseudouridine-5'-phosphate glycosidase family. Homotrimer. Mn(2+) serves as cofactor.

The catalysed reaction is D-ribose 5-phosphate + uracil = psi-UMP + H2O. Functionally, catalyzes the reversible cleavage of pseudouridine 5'-phosphate (PsiMP) to ribose 5-phosphate and uracil. Functions biologically in the cleavage direction, as part of a pseudouridine degradation pathway. This chain is Pseudouridine-5'-phosphate glycosidase, found in Jannaschia sp. (strain CCS1).